We begin with the raw amino-acid sequence, 24 residues long: Ascaphin-4 (24 aa).

In terms of tissue distribution, expressed by the skin glands.

The protein localises to the secreted. Antimicrobial peptide that shows higher potency against Gram-negative bacteria than against Gram-positive bacteria. Has a very week hemolytic activity. The protein is Ascaphin-4 of Ascaphus truei (Coastal tailed frog).